Reading from the N-terminus, the 1284-residue chain is Putative late blight resistance protein homolog R1B-16 (1284 aa).

The stretch at 533-555 forms a coiled coil; that stretch reads PRMNEEIVGFKDVIENLRNQLLN. Residues 534–821 form the NB-ARC domain; sequence RMNEEIVGFK…SESFIKSSEG (288 aa). 567-574 serves as a coordination point for ATP; the sequence is GMPGLGKT. LRR repeat units lie at residues 942-966, 985-1010, 1013-1036, 1085-1107, 1108-1135, 1159-1181, 1182-1206, and 1219-1243; these read FKFL…LFYL, LWNL…VWDM, LRHL…SAKL, PIRL…FCIS, APNL…HLKN, FPQL…ADDA, FPNL…FMDI, and ESVV…NFKL. The 68-residue stretch at 1217 to 1284 folds into the HMA domain; sequence CNESVVKSAM…VEKQRKRGML (68 aa).

Belongs to the disease resistance NB-LRR family.

It localises to the cytoplasm. Its subcellular location is the membrane. In terms of biological role, confers resistance to late blight (Phytophthora infestans) races carrying the avirulence gene Avr1. Resistance proteins guard the plant against pathogens that contain an appropriate avirulence protein via an indirect interaction with this avirulence protein. That triggers a defense system including the hypersensitive response, which restricts the pathogen growth. The protein is Putative late blight resistance protein homolog R1B-16 (R1B-16) of Solanum demissum (Wild potato).